The primary structure comprises 365 residues: Methionine import ATP-binding protein MetN (365 aa).

The region spanning 17 to 256 (IVFEHVTKEF…PQSETTQRFL (240 aa)) is the ABC transporter domain. Position 53-60 (53-60 (GHSGAGKS)) interacts with ATP. The segment at 346 to 365 (SNSAAPTTSATVPTPTEEAH) is disordered.

This sequence belongs to the ABC transporter superfamily. Methionine importer (TC 3.A.1.24) family. As to quaternary structure, the complex is composed of two ATP-binding proteins (MetN), two transmembrane proteins (MetI) and a solute-binding protein (MetQ).

Its subcellular location is the cell membrane. It catalyses the reaction L-methionine(out) + ATP + H2O = L-methionine(in) + ADP + phosphate + H(+). It carries out the reaction D-methionine(out) + ATP + H2O = D-methionine(in) + ADP + phosphate + H(+). Part of the ABC transporter complex MetNIQ involved in methionine import. Responsible for energy coupling to the transport system. This is Methionine import ATP-binding protein MetN from Cutibacterium acnes (strain DSM 16379 / KPA171202) (Propionibacterium acnes).